Here is a 153-residue protein sequence, read N- to C-terminus: Protein E6 (153 aa).

2 zinc fingers span residues 29–65 (CVYCKRPLSDADVLAFAVKELFVVWRKGFPYGACEKC) and 102–138 (CYICHKPLCWEEKEALLVGNKRFHKISGQWTGHCMNC).

This sequence belongs to the papillomaviridae E6 protein family. Forms homodimers. Interacts with ubiquitin-protein ligase UBE3A/E6-AP; this interaction stimulates UBE3A ubiquitin activity. Interacts with host TP53 and EP300; this interaction inhibits TP53 activity.

The protein localises to the host cytoplasm. Its subcellular location is the host nucleus. In terms of biological role, plays a major role in the induction and maintenance of cellular transformation. E6 associates with host UBE3A/E6-AP ubiquitin-protein ligase and modulates its activity. Sequesters tumor suppressor TP53 in the host cytoplasm and modulates its activity by interacting with host EP300 that results in the reduction of TP53 acetylation and activation. In turn, apoptosis induced by DNA damage is inhibited. E6 also protects host keratinocytes from apoptosis by mediating the degradation of host BAK1. May also inhibit host immune response. This is Protein E6 from Homo sapiens (Human).